The primary structure comprises 657 residues: 2',3'-cyclic-nucleotide 2'-phosphodiesterase/3'-nucleotidase (657 aa).

A signal peptide spans 1–26 (MMNRRHFIQISATSILALSANRFAMA). The a divalent metal cation site is built by D41, H43, D86, N126, H235, H267, and H269. Residues Y450 and 554 to 559 (YRAYGN) contribute to the substrate site.

It belongs to the 5'-nucleotidase family. It depends on a divalent metal cation as a cofactor.

The protein localises to the periplasm. It carries out the reaction a nucleoside 2',3'-cyclic phosphate + H2O = a nucleoside 3'-phosphate + H(+). It catalyses the reaction a ribonucleoside 3'-phosphate + H2O = a ribonucleoside + phosphate. In terms of biological role, this bifunctional enzyme catalyzes two consecutive reactions during ribonucleic acid degradation. Converts a 2',3'-cyclic nucleotide to a 3'-nucleotide and then the 3'-nucleotide to the corresponding nucleoside and phosphate. The sequence is that of 2',3'-cyclic-nucleotide 2'-phosphodiesterase/3'-nucleotidase (cpdB) from Haemophilus influenzae (strain ATCC 51907 / DSM 11121 / KW20 / Rd).